We begin with the raw amino-acid sequence, 501 residues long: Ectoine/hydroxyectoine transporter (501 aa).

12 helical membrane passes run 9–29 (PVFY…ATLP), 45–65 (IHFG…LITL), 86–106 (FFTW…VFWG), 137–157 (AFFH…LVIA), 190–210 (LAVI…ILQM), 220–240 (VPTS…TYLI), 258–278 (LGSL…VFIL), 311–331 (WTIF…AFIA), 343–363 (VLGV…AFGG), 395–415 (LPMT…FLVT), 441–461 (IVWG…GGLE), and 465–485 (TASL…MASF).

It belongs to the BCCT transporter (TC 2.A.15) family.

It localises to the cell inner membrane. Its function is as follows. Mediates the import of ectoine and hydroxyectoine, which function as osmotic and cold stress protectants. Also has minor uptake activities for the compatible solutes proline and glycine betaine. This chain is Ectoine/hydroxyectoine transporter, found in Virgibacillus pantothenticus.